Consider the following 379-residue polypeptide: Fimbrium subunit Fim1C (379 aa).

Residues 1–17 (MEVKSLLMVMATLTIAG) form the signal peptide. Cys-18 carries the N-palmitoyl cysteine lipid modification. Residue Cys-18 is the site of S-diacylglycerol cysteine attachment. A propeptide spanning residues 18–45 (CSQNEMTEMNPDTNRTIGLDVYTEVQTR) is cleaved from the precursor.

It belongs to the bacteroidetes fimbrillin superfamily. Mfa-like family. In terms of assembly, may be part of the fimbrial tip.

It localises to the fimbrium. Its subcellular location is the cell outer membrane. Its function is as follows. Probably a component of the fimbrium tip. Fimbriae are filamentous appendages on the cell surface that mediate cell adhesion and biofilm formation. This chain is Fimbrium subunit Fim1C (fim1C), found in Phocaeicola vulgatus (strain ATCC 8482 / DSM 1447 / JCM 5826 / CCUG 4940 / NBRC 14291 / NCTC 11154) (Bacteroides vulgatus).